A 193-amino-acid chain; its full sequence is dTTP/UTP pyrophosphatase (193 aa).

Asp77 functions as the Proton acceptor in the catalytic mechanism.

Belongs to the Maf family. YhdE subfamily. It depends on a divalent metal cation as a cofactor.

The protein resides in the cytoplasm. The enzyme catalyses dTTP + H2O = dTMP + diphosphate + H(+). The catalysed reaction is UTP + H2O = UMP + diphosphate + H(+). Functionally, nucleoside triphosphate pyrophosphatase that hydrolyzes dTTP and UTP. May have a dual role in cell division arrest and in preventing the incorporation of modified nucleotides into cellular nucleic acids. This is dTTP/UTP pyrophosphatase from Parabacteroides distasonis (strain ATCC 8503 / DSM 20701 / CIP 104284 / JCM 5825 / NCTC 11152).